A 324-amino-acid chain; its full sequence is tRNA pseudouridine synthase B (324 aa).

The active-site Nucleophile is the D49. The segment at R87 to E107 is disordered.

It belongs to the pseudouridine synthase TruB family. Type 1 subfamily.

It carries out the reaction uridine(55) in tRNA = pseudouridine(55) in tRNA. In terms of biological role, responsible for synthesis of pseudouridine from uracil-55 in the psi GC loop of transfer RNAs. This is tRNA pseudouridine synthase B from Brucella abortus (strain 2308).